A 429-amino-acid chain; its full sequence is Tol-Pal system protein TolB (429 aa).

Positions 1–21 (MKPVFKMLLSLLILWTSLLHA) are cleaved as a signal peptide.

This sequence belongs to the TolB family. The Tol-Pal system is composed of five core proteins: the inner membrane proteins TolA, TolQ and TolR, the periplasmic protein TolB and the outer membrane protein Pal. They form a network linking the inner and outer membranes and the peptidoglycan layer.

It is found in the periplasm. Functionally, part of the Tol-Pal system, which plays a role in outer membrane invagination during cell division and is important for maintaining outer membrane integrity. TolB occupies a key intermediary position in the Tol-Pal system because it communicates directly with both membrane-embedded components, Pal in the outer membrane and TolA in the inner membrane. The sequence is that of Tol-Pal system protein TolB from Hamiltonella defensa subsp. Acyrthosiphon pisum (strain 5AT).